Reading from the N-terminus, the 84-residue chain is MTDINRTLQGRVISDKMEKSMVVAIERTVKHPIYGKFIKRTTKLHVHDENNECGIGDVVEIRECRPLSKTKSWTLVRVVEKAIL.

Belongs to the universal ribosomal protein uS17 family. In terms of assembly, part of the 30S ribosomal subunit.

Functionally, one of the primary rRNA binding proteins, it binds specifically to the 5'-end of 16S ribosomal RNA. The sequence is that of Small ribosomal subunit protein uS17 from Serratia proteamaculans (strain 568).